A 329-amino-acid polypeptide reads, in one-letter code: Cardiolipin synthase (CMP-forming) (329 aa).

The transit peptide at 1–34 (MPPSVATHASLLLKAAAAAAHLHPKPFFSPRAAP) directs the protein to the mitochondrion. A disordered region spans residues 27 to 55 (FFSPRAAPPRIPSAPAPPAAGGSRYRPTT). A compositionally biased stretch (pro residues) spans 32 to 44 (AAPPRIPSAPAPP). The next 5 membrane-spanning stretches (helical) occupy residues 134 to 154 (LLTL…LLIS), 156 to 176 (FYME…AAAV), 194 to 214 (FGAF…LVLL), 228 to 248 (PWLL…MSAV), and 298 to 318 (VTSG…SLVV). Over 319–329 (YMRKIWRILLK) the chain is Mitochondrial intermembrane.

The protein belongs to the CDP-alcohol phosphatidyltransferase class-I family. The cofactor is Mn(2+).

Its subcellular location is the mitochondrion inner membrane. It catalyses the reaction a CDP-1,2-diacyl-sn-glycerol + a 1,2-diacyl-sn-glycero-3-phospho-(1'-sn-glycerol) = a cardiolipin + CMP + H(+). Its function is as follows. Catalyzes the synthesis of cardiolipin (CL) (diphosphatidylglycerol) by specifically transferring a phosphatidyl group from CDP-diacylglycerol to phosphatidylglycerol (PG). CL is a key phospholipid in mitochondrial membranes and plays important roles in maintaining the functional integrity and dynamics of mitochondria under both optimal and stress conditions. In Oryza sativa subsp. japonica (Rice), this protein is Cardiolipin synthase (CMP-forming).